Here is a 142-residue protein sequence, read N- to C-terminus: Metallothiol transferase FosB (142 aa).

Residues 5–120 form the VOC domain; the sequence is NVNHICFSVS…DGHKIELHTG (116 aa). Positions 8, 67, and 116 each coordinate Mg(2+). Catalysis depends on Glu-116, which acts as the Proton donor/acceptor.

It belongs to the fosfomycin resistance protein family. FosB subfamily. Homodimer. The cofactor is Mg(2+).

It is found in the cytoplasm. In terms of biological role, metallothiol transferase which confers resistance to fosfomycin by catalyzing the addition of a thiol cofactor to fosfomycin. L-cysteine is probably the physiological thiol donor. The chain is Metallothiol transferase FosB from Staphylococcus epidermidis (strain ATCC 35984 / DSM 28319 / BCRC 17069 / CCUG 31568 / BM 3577 / RP62A).